Reading from the N-terminus, the 574-residue chain is MRASQYLIATQKETPADAEVISHKLMLRAGLIRKMASGLYNWLPLGLRVLRKVENIVRQEMDKSGAQEVLMPVVQPAEIWQESGRWQQYGPELLRINDRHDRAFCLGPTHEEVITDLIRNEVKSYKQLPLNFYQIQTKFRDEVRPRFGVMRAREFLMKDAYSFHISQESLQETYDVMHRTYCNIFDRIGLQYRPVLADTGSIGGSASHEFHVLADSGEDDIAFSSDSDFAANVELAEALAPAKQTPGSSGAEEKHTPSQKSIEEVAAFLSVTPAQTLKTLIVLGETEDEGPAPLVALVLRGDHSLNDIKVSKLEGVADPLTFAPEERIKNELGAEVGSLGPIGLKITVIADRAAAACADFVCGANKTDYHLINANWDKEASYSRVEDLRNVVVGDPSPCGKGTIEIKRGIEVGHIFQLGTKYSAAMKATVLDENGKDVTMTMGCYGIGVSRIVASAIEQNHDDNGIIWPDAIAPFQLAIVPINMHKSDAVKEACETLYDQCQTAGIDVLLMDEPKARLGAMLADVELVGIPHRVVIGDRGLEQGNIEYKGRRDAESQEVAAASLFEFLREKIAP.

This sequence belongs to the class-II aminoacyl-tRNA synthetase family. ProS type 1 subfamily. In terms of assembly, homodimer.

The protein resides in the cytoplasm. The catalysed reaction is tRNA(Pro) + L-proline + ATP = L-prolyl-tRNA(Pro) + AMP + diphosphate. Catalyzes the attachment of proline to tRNA(Pro) in a two-step reaction: proline is first activated by ATP to form Pro-AMP and then transferred to the acceptor end of tRNA(Pro). As ProRS can inadvertently accommodate and process non-cognate amino acids such as alanine and cysteine, to avoid such errors it has two additional distinct editing activities against alanine. One activity is designated as 'pretransfer' editing and involves the tRNA(Pro)-independent hydrolysis of activated Ala-AMP. The other activity is designated 'posttransfer' editing and involves deacylation of mischarged Ala-tRNA(Pro). The misacylated Cys-tRNA(Pro) is not edited by ProRS. This chain is Proline--tRNA ligase, found in Teredinibacter turnerae (strain ATCC 39867 / T7901).